The chain runs to 83 residues: MKTSMFLTLTGLVLLFVVCYASESEEKDFPKELLSSIFAADSDFKVEERGCLGDKCDYNNGCCSGYVCSRTWKWCVLAGPWRR.

A signal peptide spans 1 to 21 (MKTSMFLTLTGLVLLFVVCYA). Residues 22 to 49 (SESEEKDFPKELLSSIFAADSDFKVEER) constitute a propeptide that is removed on maturation. 3 cysteine pairs are disulfide-bonded: cysteine 51-cysteine 63, cysteine 56-cysteine 68, and cysteine 62-cysteine 75.

It belongs to the neurotoxin 10 (Hwtx-1) family. 51 (Hntx-8) subfamily. Hntx-8 sub-subfamily. In terms of tissue distribution, expressed by the venom gland.

Its subcellular location is the secreted. Agglutinates erythrocytes. This Cyriopagopus schmidti (Chinese bird spider) protein is U5-theraphotoxin-Hs1a 3.